Here is a 1434-residue protein sequence, read N- to C-terminus: DNA-directed RNA polymerase subunit beta' (1434 aa).

Zn(2+) contacts are provided by C70, C72, C85, and C88. Residues D460, D462, and D464 each contribute to the Mg(2+) site. Residues C840, C915, C922, and C925 each contribute to the Zn(2+) site.

This sequence belongs to the RNA polymerase beta' chain family. The RNAP catalytic core consists of 2 alpha, 1 beta, 1 beta' and 1 omega subunit. When a sigma factor is associated with the core the holoenzyme is formed, which can initiate transcription. The cofactor is Mg(2+). It depends on Zn(2+) as a cofactor.

It catalyses the reaction RNA(n) + a ribonucleoside 5'-triphosphate = RNA(n+1) + diphosphate. Functionally, DNA-dependent RNA polymerase catalyzes the transcription of DNA into RNA using the four ribonucleoside triphosphates as substrates. The protein is DNA-directed RNA polymerase subunit beta' of Aeromonas hydrophila subsp. hydrophila (strain ATCC 7966 / DSM 30187 / BCRC 13018 / CCUG 14551 / JCM 1027 / KCTC 2358 / NCIMB 9240 / NCTC 8049).